The sequence spans 612 residues: Glutamine--fructose-6-phosphate aminotransferase [isomerizing] (612 aa).

The Nucleophile; for GATase activity role is filled by cysteine 2. The Glutamine amidotransferase type-2 domain maps to 2–220; that stretch reads CGIVGAIRAH…DGDIALLASD (219 aa). 2 consecutive SIS domains span residues 288–428 and 461–602; these read AKSV…VRGL and WAQQ…VDKP. Residue lysine 607 is the For Fru-6P isomerization activity of the active site.

Homodimer.

The protein localises to the cytoplasm. The catalysed reaction is D-fructose 6-phosphate + L-glutamine = D-glucosamine 6-phosphate + L-glutamate. In terms of biological role, catalyzes the first step in hexosamine metabolism, converting fructose-6P into glucosamine-6P using glutamine as a nitrogen source. The sequence is that of Glutamine--fructose-6-phosphate aminotransferase [isomerizing] from Neisseria meningitidis serogroup B (strain ATCC BAA-335 / MC58).